Consider the following 361-residue polypeptide: Phosphoserine aminotransferase (361 aa).

Position 42 (arginine 42) interacts with L-glutamate. Pyridoxal 5'-phosphate-binding positions include 76-77 (AT), tryptophan 102, threonine 152, aspartate 172, and glutamine 195. Lysine 196 is modified (N6-(pyridoxal phosphate)lysine). 237–238 (NT) serves as a coordination point for pyridoxal 5'-phosphate.

The protein belongs to the class-V pyridoxal-phosphate-dependent aminotransferase family. SerC subfamily. In terms of assembly, homodimer. Pyridoxal 5'-phosphate is required as a cofactor.

The protein resides in the cytoplasm. It catalyses the reaction O-phospho-L-serine + 2-oxoglutarate = 3-phosphooxypyruvate + L-glutamate. The enzyme catalyses 4-(phosphooxy)-L-threonine + 2-oxoglutarate = (R)-3-hydroxy-2-oxo-4-phosphooxybutanoate + L-glutamate. It functions in the pathway amino-acid biosynthesis; L-serine biosynthesis; L-serine from 3-phospho-D-glycerate: step 2/3. It participates in cofactor biosynthesis; pyridoxine 5'-phosphate biosynthesis; pyridoxine 5'-phosphate from D-erythrose 4-phosphate: step 3/5. Functionally, catalyzes the reversible conversion of 3-phosphohydroxypyruvate to phosphoserine and of 3-hydroxy-2-oxo-4-phosphonooxybutanoate to phosphohydroxythreonine. The protein is Phosphoserine aminotransferase of Xanthomonas euvesicatoria pv. vesicatoria (strain 85-10) (Xanthomonas campestris pv. vesicatoria).